A 280-amino-acid chain; its full sequence is Mevalonyl-coenzyme A hydratase SIDH (280 aa).

Positions 278-280 (SKL) match the PTS1-type peroxisomal targeting signal motif.

The protein belongs to the enoyl-CoA hydratase/isomerase family.

The protein resides in the peroxisome. It functions in the pathway siderophore biosynthesis. Mevalonyl-coenzyme A hydratase; part of the gene cluster that mediates the biosynthesis of at least 11 siderophores, including beauverichelin A, dimerumic acid (DA), Na-dimethyl coprogen (NADC), eleutherazine B, ferricrocin (FC), fusarinine A, fusarinine C (FsC), metachelin A, mevalonolactone, rhodotorulic acid (RA) and tenellin. This cocktail of siderophores for iron metabolism is essential for virulence, and more specifically for the fungal virulence in penetrating through the host cuticle. Siderophore synthesis is also involved in conidial germination under iron-deficient conditions. For biosynthesis of fusarinine C, the transacylase SIDF transfers anhydromevalonyl to N(5)-hydroxyornithine. The required anhydromevalonyl-CoA moiety is derived from mevalonate by CoA ligation and dehydration catalyzed by SIDI and sidH respectively. SIDH is not essential for siderophore production, probably due to functional redundancy of this protein family, as there are 15 homologs of SIDH in B.bassiana. The sequence is that of Mevalonyl-coenzyme A hydratase SIDH from Beauveria bassiana (strain ARSEF 2860) (White muscardine disease fungus).